The sequence spans 487 residues: Wax ester synthase/diacylglycerol acyltransferase 3 (487 aa).

The Cytoplasmic portion of the chain corresponds to 1 to 193; the sequence is MYTMKKGKDM…KHASSNKKSW (193 aa). Residue histidine 151 is the Proton acceptor of the active site. Residues 194 to 214 traverse the membrane as a helical segment; that stretch reads WLVGRFWFMIRIIFTTVVELF. Residues 215-487 are Lumenal-facing; that stretch reads KYLLTLCFMR…MEKGVHKMEV (273 aa).

It in the N-terminal section; belongs to the long-chain O-acyltransferase family. In terms of tissue distribution, mostly expressed in flowers and siliques.

The protein localises to the cell membrane. The protein resides in the endoplasmic reticulum membrane. The catalysed reaction is an acyl-CoA + a 1,2-diacyl-sn-glycerol = a triacyl-sn-glycerol + CoA. It carries out the reaction a long chain fatty alcohol + a fatty acyl-CoA = a wax ester + CoA. Its pathway is glycerolipid metabolism; triacylglycerol biosynthesis. It functions in the pathway lipid metabolism. Functionally, bifunctional wax ester synthase/diacylglycerol acyltransferase. Involved in cuticular wax biosynthesis. This is Wax ester synthase/diacylglycerol acyltransferase 3 from Arabidopsis thaliana (Mouse-ear cress).